We begin with the raw amino-acid sequence, 156 residues long: MNKIESRHRLIRSLIMEKKVHTQQELQELLEANGVIVTQSTLSRDMKALNLVKVTENNISYYVINSIAPSRWEKRLRFYMEDALIMLRPVQNQVVMKTLPGLAQSFGAILDALELPQIVATVCGDDVCLIICEDNPSAIECFDKLKEFAPPFFFSK.

The protein belongs to the ArgR family.

It localises to the cytoplasm. Its pathway is amino-acid degradation; L-arginine degradation via ADI pathway. Functionally, in the presence of arginine, coactivates the transcription of the arcABDC operon, with other regulatory proteins such as ArcR and CcpA. The chain is Arginine regulator (argR) from Streptococcus gordonii (strain Challis / ATCC 35105 / BCRC 15272 / CH1 / DL1 / V288).